The chain runs to 337 residues: Autophagy protein 5 (337 aa).

Residue K128 forms a Glycyl lysine isopeptide (Lys-Gly) (interchain with G-Cter in ATG12) linkage. The interval 271–290 (RAQTSGEERSIDDTEEADGS) is disordered. Basic and acidic residues predominate over residues 276–290 (GEERSIDDTEEADGS).

The protein belongs to the ATG5 family. As to quaternary structure, conjugated to ATG12. In terms of processing, conjugated to ATG12; which is essential for autophagy. Conjugation with ATG12 involves ATG7 as an E1-like activating enzyme and ATG10 as an E2-like conjugating enzyme. As to expression, ubiquitous.

It is found in the cytoplasm. In terms of biological role, required for autophagy. Conjugation to ATG12 is essential for plant nutrient recycling. Involved in a negative feedback loop that modulates NPR1-dependent salicylic acid (SA) signaling and limits senescence and immunity-related programmed cell death (PCD) in plants. Involved in complete proteolysis of chloroplast stroma proteins in senescent leaves. Involved in the degradation of damaged peroxisomes. In Arabidopsis thaliana (Mouse-ear cress), this protein is Autophagy protein 5.